A 514-amino-acid polypeptide reads, in one-letter code: MLSNNPLITKFRELFTVALVLALLSGCQWQDDNLTDLEKIRESGVIRVGTLNNQLSYYIGNDGPTGLDYELAQRFAQKLGVKLEMQPMFTLSGLFPTLERGGIDVVAAGLTISKDRIENYHAAPAYYYASQIVVYKNGQWRPRKPADLALNKGTLSVVKGSSHEKHLIKLKEIHPDLTWESIEETDSDELLRLVAKGELDFTIADSVDVALSQRIHPDVAIAMELTEDEPIAWFVNKSTDDSLYALLIEFFGEIKQSGELAQLEEKYFGHVGSFDYVDTRAFLRAIESKLPRWESLFKKYSNEFDWRLIAALSYQESHWNPQAVSPTGVRGMMMLTLPTAKSVGVKNRLDPEQSIRGGAEYLRKMISRVPDSIESHEKVWFALASYNVGFGHMMDARRLTHKQGGNQDTWTDVKQRLPLLRQRKYYQQSRYGYARGDEALNYVENIRRYYQSIIGYEQAHSHDYDSDDVQVVDGLQTITLPPVPPRQANVDGSLNNEAAISSAEKTIEDPGPSQ.

An N-terminal signal peptide occupies residues 1–30 (MLSNNPLITKFRELFTVALVLALLSGCQWQ). Residues 31–271 (DDNLTDLEKI…QLEEKYFGHV (241 aa)) are non-LT domain. The LT domain stretch occupies residues 272-514 (GSFDYVDTRA…KTIEDPGPSQ (243 aa)). Glutamate 316 is an active-site residue. Residues 482–514 (PVPPRQANVDGSLNNEAAISSAEKTIEDPGPSQ) form a disordered region. Positions 490 to 499 (VDGSLNNEAA) are enriched in polar residues.

This sequence in the N-terminal section; belongs to the bacterial solute-binding protein 3 family. In the C-terminal section; belongs to the transglycosylase Slt family.

The protein resides in the cell outer membrane. It catalyses the reaction Exolytic cleavage of the (1-&gt;4)-beta-glycosidic linkage between N-acetylmuramic acid (MurNAc) and N-acetylglucosamine (GlcNAc) residues in peptidoglycan, from either the reducing or the non-reducing ends of the peptidoglycan chains, with concomitant formation of a 1,6-anhydrobond in the MurNAc residue.. Its function is as follows. Murein-degrading enzyme that degrades murein glycan strands and insoluble, high-molecular weight murein sacculi, with the concomitant formation of a 1,6-anhydromuramoyl product. Lytic transglycosylases (LTs) play an integral role in the metabolism of the peptidoglycan (PG) sacculus. Their lytic action creates space within the PG sacculus to allow for its expansion as well as for the insertion of various structures such as secretion systems and flagella. The protein is Membrane-bound lytic murein transglycosylase F of Photobacterium profundum (strain SS9).